The following is a 296-amino-acid chain: Cytidine deaminase (296 aa).

CMP/dCMP-type deaminase domains lie at 47 to 167 (ELNE…FGPS) and 186 to 296 (DSND…VEPE). 88–90 (NIE) provides a ligand contact to substrate. H101 contributes to the Zn(2+) binding site. Residue E103 is the Proton donor of the active site. The Zn(2+) site is built by C128 and C131.

This sequence belongs to the cytidine and deoxycytidylate deaminase family. In terms of assembly, homodimer. Zn(2+) serves as cofactor.

It carries out the reaction cytidine + H2O + H(+) = uridine + NH4(+). The catalysed reaction is 2'-deoxycytidine + H2O + H(+) = 2'-deoxyuridine + NH4(+). In terms of biological role, this enzyme scavenges exogenous and endogenous cytidine and 2'-deoxycytidine for UMP synthesis. In Shewanella pealeana (strain ATCC 700345 / ANG-SQ1), this protein is Cytidine deaminase.